The primary structure comprises 353 residues: Forkhead box protein I3-A (353 aa).

The fork-head DNA-binding region spans 116–210 (RPPYSYSALI…DNGNFRRKRK (95 aa)). Residues 201 to 255 (DNGNFRRKRKRKSDSLAEEEGKGYSGSDSALSSPKNPSDSSERGNSPISTDQAPC) form a disordered region. A Nuclear localization signal motif is present at residues 206–212 (RRKRKRK). Residues 213-222 (SDSLAEEEGK) show a composition bias toward basic and acidic residues. A compositionally biased stretch (polar residues) spans 226 to 252 (GSDSALSSPKNPSDSSERGNSPISTDQ).

As to expression, expressed in ionocyte precursors.

The protein resides in the nucleus. Functionally, transcription factor required for epithelial cell differentiation. Involved in specification of skin ionocytes from epidermal precursors. The chain is Forkhead box protein I3-A from Danio rerio (Zebrafish).